A 459-amino-acid polypeptide reads, in one-letter code: ATP synthase subunit beta (459 aa).

147–154 (GGAGVGKT) contributes to the ATP binding site.

This sequence belongs to the ATPase alpha/beta chains family. F-type ATPases have 2 components, CF(1) - the catalytic core - and CF(0) - the membrane proton channel. CF(1) has five subunits: alpha(3), beta(3), gamma(1), delta(1), epsilon(1). CF(0) has three main subunits: a(1), b(2) and c(9-12). The alpha and beta chains form an alternating ring which encloses part of the gamma chain. CF(1) is attached to CF(0) by a central stalk formed by the gamma and epsilon chains, while a peripheral stalk is formed by the delta and b chains.

It is found in the cell inner membrane. It catalyses the reaction ATP + H2O + 4 H(+)(in) = ADP + phosphate + 5 H(+)(out). In terms of biological role, produces ATP from ADP in the presence of a proton gradient across the membrane. The catalytic sites are hosted primarily by the beta subunits. This chain is ATP synthase subunit beta, found in Hydrogenovibrio crunogenus (strain DSM 25203 / XCL-2) (Thiomicrospira crunogena).